Consider the following 357-residue polypeptide: GDP-polyphosphate phosphotransferase (357 aa).

The segment at 1–83 (MSEEPTVSPP…DSTSASLPAN (83 aa)) is disordered. Low complexity predominate over residues 14-25 (QPAAQPAKPARP). The span at 26 to 40 (AARRAPRKPATRRPR) shows a compositional bias: basic residues.

The protein belongs to the polyphosphate kinase 2 (PPK2) family. Class I subfamily. As to quaternary structure, homotetramer. Also forms octamers. Mg(2+) serves as cofactor. Requires Mn(2+) as cofactor.

The catalysed reaction is [phosphate](n) + GTP = [phosphate](n+1) + GDP. The enzyme catalyses [phosphate](n) + ATP = [phosphate](n+1) + ADP. In terms of biological role, uses inorganic polyphosphate (polyP) as a donor to convert GDP to GTP and ADP to ATP. Shows a preference for GDP. Can also catalyze the synthesis of polyP from GTP or ATP, but the rate of polyP utilization is 75-fold greater than the rate of polyP synthesis. The protein is GDP-polyphosphate phosphotransferase of Pseudomonas aeruginosa (strain ATCC 15692 / DSM 22644 / CIP 104116 / JCM 14847 / LMG 12228 / 1C / PRS 101 / PAO1).